The chain runs to 577 residues: Outer spore wall assembly protein SHE10 (577 aa).

A signal peptide spans 1 to 23 (MGKLIKLITTLTVLVSLLQYCCE). Coiled coils occupy residues 379–416 (NETR…ENVE) and 513–561 (ILRS…EEDV). Basic and acidic residues predominate over residues 525 to 545 (RERKERERKEREKAAAEEFQR). Positions 525 to 577 (RERKERERKEREKAAAEEFQRQQELLRQQEEEDEEDVSYTSTSTITTTTTMTL) are disordered. Low complexity predominate over residues 562-577 (SYTSTSTITTTTTMTL).

This sequence belongs to the SHE10 family. Component of the mitochondria-localized RNase mitochondrial RNA-processing (RNase MRP) composed of one single RNA encoded by the NME1 gene and at least 31 proteins. Absent in the nucleus-localized RNase MRP (NuMRP).

Its subcellular location is the mitochondrion. Functionally, involved in spore wall assembly. May be a component of the mitochondrial RNase MRP (MtMRP), a ribonucleoprotein endoribonuclease involved in the cleaving RNA transcripts to generate primers for DNA replication in mitochondria. The chain is Outer spore wall assembly protein SHE10 from Saccharomyces cerevisiae (strain Lalvin EC1118 / Prise de mousse) (Baker's yeast).